The primary structure comprises 679 residues: G-protein-signaling modulator 2 (679 aa).

Residues 22–357 are important for interaction with NUMA1; INSC and FRMPD1; it reads ASCLELALEG…HLEISREVGD (336 aa). 8 TPR repeats span residues 24-57, 62-95, 102-135, 142-184, 202-235, 242-275, 282-315, and 322-355; these read CLELALEGERLCKSGDCRAGVSFFEAAVQVGTED, SAIYSQLGNAYFYLHDYAKALEYHHHDLTLARTI, AKASGNLGNTLKVLGNFDEAIVCCQRHLDISREL, ARAL…AVDL, GRAFGNLGNTHYLLGNFRDAVIAHEQRLLIAKEF, RRAYSNLGNAYIFLGEFETASEYYKKTLLLARQL, AQSCYSLGNTYTLLQDYEKAIDYHLKHLAIAQEL, and GRACWSLGNAYTALGNHDQAMHFAEKHLEISREV. Phosphoserine is present on residues serine 408 and serine 484. Threonine 487 carries the phosphothreonine modification. One can recognise a GoLoco 1 domain in the interval 490-512; sequence DEGFFDLLRRFQSNRMDDQRCHL. A phosphoserine mark is found at serine 540 and serine 564. GoLoco domains follow at residues 543–565, 594–616, and 628–650; these read TDEFLDLLASSQSRRLDDQRASF, DEDFFDILVKCQGSRLDDQRCAP, and DEDFFSLILRSQAKRMDEQRVLL. Residues arginine 608, arginine 613, arginine 642, and arginine 647 each coordinate GDP.

The protein belongs to the GPSM family. As to quaternary structure, interacts with the dynein-dynactin complex; this interaction is inhibited in a PLK1-dependent manner. Part of a spindle orientation complex at least composed of GNAI1, GPSM2 and NUMA1. Interacts with LLGL2. Interacts (via TPR repeat region) with INSC/inscuteable. Interacts (via TPR repeat region) with NUMA1 (via C-terminus); this interaction is direct, inhibited in a PLK1-dependent manner and promotes spindle pole organization. INSC and NUMA1 compete for the same binding site, but INSC has higher affinity and can displace NUMA1 (in vitro). Interacts with GNAI2. Interacts (via GoLoco domains) with the GDP-bound form of GNAI1 and GNAI3; has much lower affinity for the GTP-bound form. Interaction with GDP-bound GNAI3 strongly enhances the affinity for NUMA1. Interacts (via TPR repeat region) with FRMPD1. INSC and FRMPD1 compete for the same binding site, but INSC has higher affinity and can displace FRMPD1 (in vitro). Interacts (via TPR repeat region) with FRMPD4. Identified in a complex with INSC and F2RL2/Par3. Interacts with TASOR. Detected in brain and liver (at protein level). Detected in brain, spleen, liver and testis, and at lower levels in heart, lung and kidney. Enriched in the ventricular zone of the developing central nervous systems. Expressed in proximal colon, ileum, ovary, Sertoli cells of the testis and granular cells within the cerebellum.

It is found in the cytoplasm. The protein localises to the cell cortex. The protein resides in the cytoskeleton. It localises to the spindle pole. Its subcellular location is the lateral cell membrane. Functionally, plays an important role in mitotic spindle pole organization via its interaction with NUMA1. Required for cortical dynein-dynactin complex recruitment during metaphase. Plays a role in metaphase spindle orientation. Plays an important role in asymmetric cell divisions. Has guanine nucleotide dissociation inhibitor (GDI) activity towards G(i) alpha proteins, such as GNAI1 and GNAI3, and thereby regulates their activity. The polypeptide is G-protein-signaling modulator 2 (Gpsm2) (Mus musculus (Mouse)).